The chain runs to 191 residues: Holliday junction branch migration complex subunit RuvA (191 aa).

The segment at 1-64 (MIGSITGNVE…DNITQLYGFL (64 aa)) is domain I. Residues 65–142 (NRQEQDYLKM…KMPIEETFSI (78 aa)) are domain II. A flexible linker region spans residues 143–146 (IEND). Residues 146-191 (DDSLAALISLGYEKLKAFNVIQEIKSKTPDASTQEVIRKALQKLSQ) form a domain III region.

The protein belongs to the RuvA family. Homotetramer. Forms an RuvA(8)-RuvB(12)-Holliday junction (HJ) complex. HJ DNA is sandwiched between 2 RuvA tetramers; dsDNA enters through RuvA and exits via RuvB. An RuvB hexamer assembles on each DNA strand where it exits the tetramer. Each RuvB hexamer is contacted by two RuvA subunits (via domain III) on 2 adjacent RuvB subunits; this complex drives branch migration. In the full resolvosome a probable DNA-RuvA(4)-RuvB(12)-RuvC(2) complex forms which resolves the HJ.

The protein localises to the cytoplasm. In terms of biological role, the RuvA-RuvB-RuvC complex processes Holliday junction (HJ) DNA during genetic recombination and DNA repair, while the RuvA-RuvB complex plays an important role in the rescue of blocked DNA replication forks via replication fork reversal (RFR). RuvA specifically binds to HJ cruciform DNA, conferring on it an open structure. The RuvB hexamer acts as an ATP-dependent pump, pulling dsDNA into and through the RuvAB complex. HJ branch migration allows RuvC to scan DNA until it finds its consensus sequence, where it cleaves and resolves the cruciform DNA. The chain is Holliday junction branch migration complex subunit RuvA from Ehrlichia ruminantium (strain Welgevonden).